The primary structure comprises 151 residues: Cell division protein SepF (151 aa).

It belongs to the SepF family. As to quaternary structure, homodimer. Interacts with FtsZ.

The protein localises to the cytoplasm. Functionally, cell division protein that is part of the divisome complex and is recruited early to the Z-ring. Probably stimulates Z-ring formation, perhaps through the cross-linking of FtsZ protofilaments. Its function overlaps with FtsA. The sequence is that of Cell division protein SepF from Desulfitobacterium hafniense (strain Y51).